A 200-amino-acid chain; its full sequence is Outer-membrane lipoprotein carrier protein (200 aa).

The signal sequence occupies residues 1-18 (MKAVVFAMVMAVSFNVFA).

This sequence belongs to the LolA family. As to quaternary structure, monomer.

Its subcellular location is the periplasm. In terms of biological role, participates in the translocation of lipoproteins from the inner membrane to the outer membrane. Only forms a complex with a lipoprotein if the residue after the N-terminal Cys is not an aspartate (The Asp acts as a targeting signal to indicate that the lipoprotein should stay in the inner membrane). The sequence is that of Outer-membrane lipoprotein carrier protein from Idiomarina loihiensis (strain ATCC BAA-735 / DSM 15497 / L2-TR).